The chain runs to 378 residues: Flap endonuclease 1 (378 aa).

The tract at residues 1-105 is N-domain; the sequence is MGIKGLNSII…HELDKRTERR (105 aa). Asp34 serves as a coordination point for Mg(2+). Residues Arg47 and Arg71 each contribute to the DNA site. Residues Asp87, Glu156, Glu158, Asp177, and Asp179 each contribute to the Mg(2+) site. The interval 120–251 is I-domain; the sequence is EIMKHERRLV…VTALKLIKEH (132 aa). Glu156 is a binding site for DNA. Residues Gly229 and Asp231 each contribute to the DNA site. Asp231 lines the Mg(2+) pocket. The interval 337–345 is interaction with PCNA; that stretch reads VQGRLDSFF. Positions 356 to 367 are enriched in low complexity; sequence AASARKAQAAKK. The segment at 356 to 378 is disordered; sequence AASARKAQAAKKTNQKGKVLKRR. The segment covering 368–378 has biased composition (basic residues); that stretch reads TNQKGKVLKRR.

This sequence belongs to the XPG/RAD2 endonuclease family. FEN1 subfamily. Interacts with PCNA. Three molecules of FEN1 bind to one PCNA trimer with each molecule binding to one PCNA monomer. PCNA stimulates the nuclease activity without altering cleavage specificity. Mg(2+) serves as cofactor. Phosphorylated. Phosphorylation upon DNA damage induces relocalization to the nuclear plasma.

Its subcellular location is the nucleus. It localises to the nucleolus. The protein localises to the nucleoplasm. The protein resides in the mitochondrion. Structure-specific nuclease with 5'-flap endonuclease and 5'-3' exonuclease activities involved in DNA replication and repair. During DNA replication, cleaves the 5'-overhanging flap structure that is generated by displacement synthesis when DNA polymerase encounters the 5'-end of a downstream Okazaki fragment. It enters the flap from the 5'-end and then tracks to cleave the flap base, leaving a nick for ligation. Also involved in the long patch base excision repair (LP-BER) pathway, by cleaving within the apurinic/apyrimidinic (AP) site-terminated flap. Acts as a genome stabilization factor that prevents flaps from equilibrating into structures that lead to duplications and deletions. Also possesses 5'-3' exonuclease activity on nicked or gapped double-stranded DNA, and exhibits RNase H activity. Also involved in replication and repair of rDNA and in repairing mitochondrial DNA. The sequence is that of Flap endonuclease 1 from Eremothecium gossypii (strain ATCC 10895 / CBS 109.51 / FGSC 9923 / NRRL Y-1056) (Yeast).